A 145-amino-acid polypeptide reads, in one-letter code: Basic phospholipase A2 S2-22 (145 aa).

A signal peptide spans 1 to 19; that stretch reads MYPAHLLVLLAVCVSLLGA. Positions 20-27 are excised as a propeptide; the sequence is SDIPPQPL. 7 disulfide bridges follow: C38/C99, C54/C144, C56/C72, C71/C127, C78/C120, C88/C113, and C106/C118. The Ca(2+) site is built by Y55, G57, and G59. H75 is an active-site residue. D76 is a binding site for Ca(2+). D121 is a catalytic residue.

This sequence belongs to the phospholipase A2 family. Group I subfamily. D49 sub-subfamily. Ca(2+) is required as a cofactor. As to expression, expressed by the venom gland.

The protein resides in the secreted. The catalysed reaction is a 1,2-diacyl-sn-glycero-3-phosphocholine + H2O = a 1-acyl-sn-glycero-3-phosphocholine + a fatty acid + H(+). In terms of biological role, snake venom phospholipase A2 (PLA2) that inhibits collagen-induced platelet aggregation. PLA2 catalyzes the calcium-dependent hydrolysis of the 2-acyl groups in 3-sn-phosphoglycerides. This chain is Basic phospholipase A2 S2-22, found in Austrelaps superbus (Lowland copperhead snake).